A 122-amino-acid chain; its full sequence is Large ribosomal subunit protein uL14 (122 aa).

This sequence belongs to the universal ribosomal protein uL14 family. In terms of assembly, part of the 50S ribosomal subunit. Forms a cluster with proteins L3 and L19. In the 70S ribosome, L14 and L19 interact and together make contacts with the 16S rRNA in bridges B5 and B8.

In terms of biological role, binds to 23S rRNA. Forms part of two intersubunit bridges in the 70S ribosome. This Fusobacterium nucleatum subsp. nucleatum (strain ATCC 25586 / DSM 15643 / BCRC 10681 / CIP 101130 / JCM 8532 / KCTC 2640 / LMG 13131 / VPI 4355) protein is Large ribosomal subunit protein uL14.